The following is a 294-amino-acid chain: Peroxidase-like protein 3 (294 aa).

N-linked (GlcNAc...) asparagine glycosylation is present at N129.

It belongs to the peroxidase family. As to expression, component of the acid-insoluble and acid-soluble organic matrix of calcified layers of the shell (at protein level).

The protein resides in the secreted. The chain is Peroxidase-like protein 3 from Lottia gigantea (Giant owl limpet).